Reading from the N-terminus, the 196-residue chain is FMN-dependent NADH:quinone oxidoreductase (196 aa).

Position 10 (S10) interacts with FMN.

Belongs to the azoreductase type 1 family. Homodimer. The cofactor is FMN.

It carries out the reaction 2 a quinone + NADH + H(+) = 2 a 1,4-benzosemiquinone + NAD(+). The catalysed reaction is N,N-dimethyl-1,4-phenylenediamine + anthranilate + 2 NAD(+) = 2-(4-dimethylaminophenyl)diazenylbenzoate + 2 NADH + 2 H(+). In terms of biological role, quinone reductase that provides resistance to thiol-specific stress caused by electrophilic quinones. Functionally, also exhibits azoreductase activity. Catalyzes the reductive cleavage of the azo bond in aromatic azo compounds to the corresponding amines. The protein is FMN-dependent NADH:quinone oxidoreductase of Cereibacter sphaeroides (strain ATCC 17029 / ATH 2.4.9) (Rhodobacter sphaeroides).